The chain runs to 289 residues: Protease HtpX homolog (289 aa).

Helical transmembrane passes span 8 to 28 (LALL…VIGG) and 29 to 49 (SSGL…SWYQ). Histidine 132 contacts Zn(2+). Residue glutamate 133 is part of the active site. A Zn(2+)-binding site is contributed by histidine 136. Helical transmembrane passes span 151-171 (VAGA…FGGI) and 183-203 (LGVL…QLAI). Position 208 (glutamate 208) interacts with Zn(2+).

It belongs to the peptidase M48B family. It depends on Zn(2+) as a cofactor.

The protein resides in the cell inner membrane. The protein is Protease HtpX homolog of Trichormus variabilis (strain ATCC 29413 / PCC 7937) (Anabaena variabilis).